Here is a 448-residue protein sequence, read N- to C-terminus: Tubulin beta chain (448 aa).

GTP contacts are provided by Gln11, Glu69, Ser138, Gly142, Thr143, Gly144, Asn204, and Asn226. Glu69 contributes to the Mg(2+) binding site. Positions 426-448 are disordered; sequence QDAGIDEEEEEYEEEAPVDEPLE. A compositionally biased stretch (acidic residues) spans 429-448; the sequence is GIDEEEEEYEEEAPVDEPLE.

It belongs to the tubulin family. In terms of assembly, dimer of alpha and beta chains. A typical microtubule is a hollow water-filled tube with an outer diameter of 25 nm and an inner diameter of 15 nM. Alpha-beta heterodimers associate head-to-tail to form protofilaments running lengthwise along the microtubule wall with the beta-tubulin subunit facing the microtubule plus end conferring a structural polarity. Microtubules usually have 13 protofilaments but different protofilament numbers can be found in some organisms and specialized cells. The cofactor is Mg(2+).

It localises to the cytoplasm. The protein localises to the cytoskeleton. Its function is as follows. Tubulin is the major constituent of microtubules, a cylinder consisting of laterally associated linear protofilaments composed of alpha- and beta-tubulin heterodimers. Microtubules grow by the addition of GTP-tubulin dimers to the microtubule end, where a stabilizing cap forms. Below the cap, tubulin dimers are in GDP-bound state, owing to GTPase activity of alpha-tubulin. The chain is Tubulin beta chain (TUB2) from Epichloe coenophiala (Tall fescue endophyte fungus).